The chain runs to 356 residues: Protein RecA (356 aa).

ATP is bound at residue 71–78 (GPESSGKT).

Belongs to the RecA family.

It is found in the cytoplasm. In terms of biological role, can catalyze the hydrolysis of ATP in the presence of single-stranded DNA, the ATP-dependent uptake of single-stranded DNA by duplex DNA, and the ATP-dependent hybridization of homologous single-stranded DNAs. It interacts with LexA causing its activation and leading to its autocatalytic cleavage. The sequence is that of Protein RecA from Synechococcus elongatus (strain ATCC 33912 / PCC 7942 / FACHB-805) (Anacystis nidulans R2).